The primary structure comprises 264 residues: Ribosomal RNA small subunit methyltransferase J (264 aa).

S-adenosyl-L-methionine-binding positions include R111–D112, E127–R128, and D180.

Belongs to the methyltransferase superfamily. RsmJ family.

The protein localises to the cytoplasm. The enzyme catalyses guanosine(1516) in 16S rRNA + S-adenosyl-L-methionine = N(2)-methylguanosine(1516) in 16S rRNA + S-adenosyl-L-homocysteine + H(+). Specifically methylates the guanosine in position 1516 of 16S rRNA. In Alkalilimnicola ehrlichii (strain ATCC BAA-1101 / DSM 17681 / MLHE-1), this protein is Ribosomal RNA small subunit methyltransferase J.